We begin with the raw amino-acid sequence, 190 residues long: Imidazole glycerol phosphate synthase subunit HisH (190 aa).

Positions 2-190 (IVGVVDYTVG…IKRFLAVAKR (189 aa)) constitute a Glutamine amidotransferase type-1 domain. Cysteine 73 serves as the catalytic Nucleophile. Active-site residues include histidine 169 and glutamate 171.

As to quaternary structure, heterodimer of HisH and HisF.

It is found in the cytoplasm. The enzyme catalyses 5-[(5-phospho-1-deoxy-D-ribulos-1-ylimino)methylamino]-1-(5-phospho-beta-D-ribosyl)imidazole-4-carboxamide + L-glutamine = D-erythro-1-(imidazol-4-yl)glycerol 3-phosphate + 5-amino-1-(5-phospho-beta-D-ribosyl)imidazole-4-carboxamide + L-glutamate + H(+). The catalysed reaction is L-glutamine + H2O = L-glutamate + NH4(+). The protein operates within amino-acid biosynthesis; L-histidine biosynthesis; L-histidine from 5-phospho-alpha-D-ribose 1-diphosphate: step 5/9. Functionally, IGPS catalyzes the conversion of PRFAR and glutamine to IGP, AICAR and glutamate. The HisH subunit catalyzes the hydrolysis of glutamine to glutamate and ammonia as part of the synthesis of IGP and AICAR. The resulting ammonia molecule is channeled to the active site of HisF. This chain is Imidazole glycerol phosphate synthase subunit HisH, found in Pyrobaculum aerophilum (strain ATCC 51768 / DSM 7523 / JCM 9630 / CIP 104966 / NBRC 100827 / IM2).